The following is a 342-amino-acid chain: Holliday junction branch migration complex subunit RuvB (342 aa).

The large ATPase domain (RuvB-L) stretch occupies residues 1–185 (MRKDYLNSNK…FGINTRLAYY (185 aa)). Residues Leu-24, Arg-25, Gly-66, Lys-69, Thr-70, Thr-71, 132 to 134 (EDF), Arg-175, Tyr-185, and Arg-222 contribute to the ATP site. Residue Thr-70 coordinates Mg(2+). The segment at 186-256 (DVTLLTQIVK…IAQMALKALD (71 aa)) is small ATPAse domain (RuvB-S). The interval 259-342 (EDGLDEMDNR…PPQRAGTLFE (84 aa)) is head domain (RuvB-H). 2 residues coordinate DNA: Arg-314 and Arg-319.

It belongs to the RuvB family. Homohexamer. Forms an RuvA(8)-RuvB(12)-Holliday junction (HJ) complex. HJ DNA is sandwiched between 2 RuvA tetramers; dsDNA enters through RuvA and exits via RuvB. An RuvB hexamer assembles on each DNA strand where it exits the tetramer. Each RuvB hexamer is contacted by two RuvA subunits (via domain III) on 2 adjacent RuvB subunits; this complex drives branch migration. In the full resolvosome a probable DNA-RuvA(4)-RuvB(12)-RuvC(2) complex forms which resolves the HJ.

The protein localises to the cytoplasm. The enzyme catalyses ATP + H2O = ADP + phosphate + H(+). In terms of biological role, the RuvA-RuvB-RuvC complex processes Holliday junction (HJ) DNA during genetic recombination and DNA repair, while the RuvA-RuvB complex plays an important role in the rescue of blocked DNA replication forks via replication fork reversal (RFR). RuvA specifically binds to HJ cruciform DNA, conferring on it an open structure. The RuvB hexamer acts as an ATP-dependent pump, pulling dsDNA into and through the RuvAB complex. RuvB forms 2 homohexamers on either side of HJ DNA bound by 1 or 2 RuvA tetramers; 4 subunits per hexamer contact DNA at a time. Coordinated motions by a converter formed by DNA-disengaged RuvB subunits stimulates ATP hydrolysis and nucleotide exchange. Immobilization of the converter enables RuvB to convert the ATP-contained energy into a lever motion, pulling 2 nucleotides of DNA out of the RuvA tetramer per ATP hydrolyzed, thus driving DNA branch migration. The RuvB motors rotate together with the DNA substrate, which together with the progressing nucleotide cycle form the mechanistic basis for DNA recombination by continuous HJ branch migration. Branch migration allows RuvC to scan DNA until it finds its consensus sequence, where it cleaves and resolves cruciform DNA. In Amoebophilus asiaticus (strain 5a2), this protein is Holliday junction branch migration complex subunit RuvB.